A 95-amino-acid chain; its full sequence is Putative defensin-like protein 252 (95 aa).

Residues 1–27 (MRCVTSFVVLCILMFLVVNNVKVDVKA) form the signal peptide. Intrachain disulfides connect Cys34–Cys93, Cys45–Cys72, Cys56–Cys85, and Cys70–Cys87.

This sequence belongs to the DEFL family.

It is found in the secreted. In Arabidopsis thaliana (Mouse-ear cress), this protein is Putative defensin-like protein 252 (SCRL13).